The primary structure comprises 186 residues: Phosphopantetheine adenylyltransferase (186 aa).

Thr14 contributes to the substrate binding site. Residues Thr14–Phe15 and His22 each bind ATP. Substrate contacts are provided by Lys46, Leu78, and Arg92. ATP is bound by residues Gly93 to Arg95, Glu103, and Trp128 to Thr134.

This sequence belongs to the bacterial CoaD family. Homohexamer. Requires Mg(2+) as cofactor.

Its subcellular location is the cytoplasm. The enzyme catalyses (R)-4'-phosphopantetheine + ATP + H(+) = 3'-dephospho-CoA + diphosphate. The protein operates within cofactor biosynthesis; coenzyme A biosynthesis; CoA from (R)-pantothenate: step 4/5. Reversibly transfers an adenylyl group from ATP to 4'-phosphopantetheine, yielding dephospho-CoA (dPCoA) and pyrophosphate. The polypeptide is Phosphopantetheine adenylyltransferase (Nitratidesulfovibrio vulgaris (strain ATCC 29579 / DSM 644 / CCUG 34227 / NCIMB 8303 / VKM B-1760 / Hildenborough) (Desulfovibrio vulgaris)).